We begin with the raw amino-acid sequence, 327 residues long: PDZ and LIM domain protein 1 (327 aa).

Residue T2 is modified to N-acetylthreonine. In terms of domain architecture, PDZ spans 3 to 85 (TQQIVLQGPG…NMTLTVSRSE (83 aa)). A phosphoserine mark is found at S90 and S130. Y142 carries the phosphotyrosine modification. The interval 161–186 (VESKTSASGEEANSRPSAQPHPSGGL) is disordered. One can recognise an LIM zinc-binding domain in the interval 256–315 (PICDKCGTGIVGVFVKLRDHHRHPECYVCTDCGINLKQKGHFFVGDQIYCEKHARERVTP). Residues C258, C261, H278, C281, C284, C287, C305, and H308 each coordinate Zn(2+). T314 carries the post-translational modification Phosphothreonine. The residue at position 319 (Y319) is a Phosphotyrosine.

Interacts with ACTN1. Interacts with ACTN2 and ACTN4. Interacts with PDLIM4. Expressed most abundantly in heart, lung and liver, moderately in spleen and skeletal muscle, and at extremely low levels (if at all) in testis and brain tissues.

The protein localises to the cytoplasm. The protein resides in the cytoskeleton. It is found in the myofibril. It localises to the sarcomere. Its subcellular location is the z line. In terms of biological role, cytoskeletal protein that may act as an adapter that brings other proteins (like kinases) to the cytoskeleton. Involved in assembly, disassembly and directioning of stress fibers in fibroblasts. Required for the localization of ACTN1 and PALLD to stress fibers. Required for cell migration and in maintaining cell polarity of fibroblasts. In Rattus norvegicus (Rat), this protein is PDZ and LIM domain protein 1 (Pdlim1).